Here is a 241-residue protein sequence, read N- to C-terminus: Sugar fermentation stimulation protein homolog (241 aa).

Belongs to the SfsA family.

The chain is Sugar fermentation stimulation protein homolog from Trichormus variabilis (strain ATCC 29413 / PCC 7937) (Anabaena variabilis).